Reading from the N-terminus, the 104-residue chain is Membrane magnesium transporter (104 aa).

At 1-2 (MN) the chain is on the cytoplasmic side. Residues 3–23 (LGFLVGVFGVLILSHAAYSTI) traverse the membrane as a helical segment. Residues 24 to 40 (QYRGLLKIMEEEFSRPP) lie on the Lumenal side of the membrane. The chain crosses the membrane as a helical span at residues 41-61 (INVILELIIGLALCMWAALTF). The Cytoplasmic portion of the chain corresponds to 62 to 104 (PGKFLSIHPDSDENRAVFLPDNSDFMIFNHRGRLFPPQIDMKF).

The protein belongs to the membrane magnesium transporter (TC 1.A.67) family. In terms of assembly, component of the ER membrane protein complex (EMC).

It localises to the endoplasmic reticulum membrane. Its subcellular location is the golgi apparatus membrane. It is found in the early endosome membrane. In terms of biological role, mediates Mg(2+) transport. This Arabidopsis thaliana (Mouse-ear cress) protein is Membrane magnesium transporter.